Here is a 328-residue protein sequence, read N- to C-terminus: Nitrilase (328 aa).

The CN hydrolase domain maps to 9–286 (VRVAAIQAEP…EGILYANVDV (278 aa)). The active-site Proton acceptor is glutamate 49. The active site involves lysine 131. Cysteine 166 serves as the catalytic Nucleophile.

The protein belongs to the carbon-nitrogen hydrolase superfamily. Nitrilase family.

The enzyme catalyses a nitrile + 2 H2O = a carboxylate + NH4(+). Nitrilase that hydrolyzes preferentially 4-cyanopyridine. Is also able to hydrolyze some aliphatic nitriles, such as (R,S)-mandelonitrile. This Penicillium rubens (strain ATCC 28089 / DSM 1075 / NRRL 1951 / Wisconsin 54-1255) (Penicillium chrysogenum) protein is Nitrilase.